The primary structure comprises 157 residues: Crossover junction endodeoxyribonuclease RuvC (157 aa).

Active-site residues include D7, E67, and D140. Residues D7, E67, and D140 each contribute to the Mg(2+) site.

It belongs to the RuvC family. As to quaternary structure, homodimer which binds Holliday junction (HJ) DNA. The HJ becomes 2-fold symmetrical on binding to RuvC with unstacked arms; it has a different conformation from HJ DNA in complex with RuvA. In the full resolvosome a probable DNA-RuvA(4)-RuvB(12)-RuvC(2) complex forms which resolves the HJ. Mg(2+) is required as a cofactor.

It is found in the cytoplasm. It carries out the reaction Endonucleolytic cleavage at a junction such as a reciprocal single-stranded crossover between two homologous DNA duplexes (Holliday junction).. Functionally, the RuvA-RuvB-RuvC complex processes Holliday junction (HJ) DNA during genetic recombination and DNA repair. Endonuclease that resolves HJ intermediates. Cleaves cruciform DNA by making single-stranded nicks across the HJ at symmetrical positions within the homologous arms, yielding a 5'-phosphate and a 3'-hydroxyl group; requires a central core of homology in the junction. The consensus cleavage sequence is 5'-(A/T)TT(C/G)-3'. Cleavage occurs on the 3'-side of the TT dinucleotide at the point of strand exchange. HJ branch migration catalyzed by RuvA-RuvB allows RuvC to scan DNA until it finds its consensus sequence, where it cleaves and resolves the cruciform DNA. This is Crossover junction endodeoxyribonuclease RuvC from Thermosipho melanesiensis (strain DSM 12029 / CIP 104789 / BI429).